The sequence spans 272 residues: Catechol O-methyltransferase (272 aa).

At 1 to 6 (MLEAPP) the chain is on the cytoplasmic side. The chain crosses the membrane as a helical; Signal-anchor for type II membrane protein span at residues 7-27 (LLLVAGGVGLALLALRWLATT). At 28 to 272 (DLQFFGRAFI…YKGLSGPARP (245 aa)) the chain is on the extracellular side. Residues V93, E115, S123, E141, 168-171 (GASQ), S170, and D192 each bind S-adenosyl-L-methionine. D192 contacts Mg(2+). Residue K195 participates in substrate binding. The Mg(2+) site is built by D220 and N221. 2 residues coordinate substrate: N221 and E250. S267 bears the Phosphoserine mark.

This sequence belongs to the class I-like SAM-binding methyltransferase superfamily. Cation-dependent O-methyltransferase family. It depends on Mg(2+) as a cofactor.

Its subcellular location is the cytoplasm. The protein resides in the cell membrane. It catalyses the reaction a catechol + S-adenosyl-L-methionine = a guaiacol + S-adenosyl-L-homocysteine + H(+). The catalysed reaction is 2-hydroxyestrone + S-adenosyl-L-methionine = 2-hydroxy-3-methoxy-estrone + S-adenosyl-L-homocysteine + H(+). The enzyme catalyses 4-hydroxyestrone + S-adenosyl-L-methionine = 4-methoxyestrone + S-adenosyl-L-homocysteine + H(+). It carries out the reaction 2-hydroxyestrone + S-adenosyl-L-methionine = 2-methoxyestrone + S-adenosyl-L-homocysteine + H(+). It catalyses the reaction 4-hydroxy-17beta-estradiol + S-adenosyl-L-methionine = 4-methoxy-17beta-estradiol + S-adenosyl-L-homocysteine + H(+). The catalysed reaction is 2-hydroxy-17beta-estradiol + S-adenosyl-L-methionine = 2-hydroxy-3-methoxy-17beta-estradiol + S-adenosyl-L-homocysteine + H(+). The enzyme catalyses 2-hydroxy-17beta-estradiol + S-adenosyl-L-methionine = 2-methoxy-17beta-estradiol + S-adenosyl-L-homocysteine + H(+). Its function is as follows. Catalyzes the O-methylation, and thereby the inactivation, of catecholamine neurotransmitters and catechol hormones. Also shortens the biological half-lives of certain neuroactive drugs, like L-DOPA, alpha-methyl DOPA and isoproterenol. This chain is Catechol O-methyltransferase (COMT), found in Bos taurus (Bovine).